Here is a 185-residue protein sequence, read N- to C-terminus: MINEIKKDTQQRMEKSLEALKSHISKIRTGRAQPSLLDGIQVEYYGSATPLRQVANVVAEDARTLAVNVFDRSLISAVEKAILTSDLGLNPSSAGATIRVPLPALTEERRRDLIKIVKNEGEQGKIAIRNVRRDANDQIKALLKDKEISEDEERKAQDEIQKITDGYVKKVDEVLMAKEKELLDF.

It belongs to the RRF family.

It localises to the cytoplasm. Responsible for the release of ribosomes from messenger RNA at the termination of protein biosynthesis. May increase the efficiency of translation by recycling ribosomes from one round of translation to another. This chain is Ribosome-recycling factor, found in Haemophilus ducreyi (strain 35000HP / ATCC 700724).